Here is a 173-residue protein sequence, read N- to C-terminus: MALRVVRSVRALLCTLRAVPSPAAPCPPRPWQLGVGAVRTLRTGPALLSVRKFTEKHEWVTTENGIGTVGISNFAQEALGDVVYCSLPEVGTKLNKQDEFGALESVKAASELYSPLSGEVTEINEALAENPGLVNKSCYEDGWLIKMTLSNPSELDELMSEEAYEKYIKSIEE.

The N-terminal 48 residues, 1–48, are a transit peptide targeting the mitochondrion; sequence MALRVVRSVRALLCTLRAVPSPAAPCPPRPWQLGVGAVRTLRTGPALL. Residues 66–148 form the Lipoyl-binding domain; it reads IGTVGISNFA…YEDGWLIKMT (83 aa). The residue at position 107 (Lys-107) is an N6-lipoyllysine.

The protein belongs to the GcvH family. As to quaternary structure, interacts with GLDC. The glycine cleavage system is composed of four proteins: P (GLDC), T (GCST), L (DLD) and H (GCSH). The cofactor is (R)-lipoate.

It localises to the mitochondrion. The glycine cleavage system catalyzes the degradation of glycine. The H protein (GCSH) shuttles the methylamine group of glycine from the P protein (GLDC) to the T protein (GCST). Has a pivotal role in the lipoylation of enzymes involved in cellular energetics such as the mitochondrial dihydrolipoyllysine-residue acetyltransferase component of pyruvate dehydrogenase complex (DLAT), and the mitochondrial dihydrolipoyllysine-residue succinyltransferase component of 2-oxoglutarate dehydrogenase complex (DLST). In Homo sapiens (Human), this protein is Glycine cleavage system H protein, mitochondrial.